Reading from the N-terminus, the 525-residue chain is Cytochrome P450 monooxygenase ltmJ (525 aa).

A helical transmembrane segment spans residues 21–43 (LTWWQTIVSFIIFCIMCSWLPGN). N-linked (GlcNAc...) asparagine glycosylation is present at Asn-136. Cys-465 provides a ligand contact to heme.

Belongs to the cytochrome P450 family. The cofactor is heme.

It is found in the membrane. The protein operates within secondary metabolite biosynthesis. Functionally, cytochrome P450 monooxygenase; part of the gene clusters that mediates the biosynthesis of lolitrems, indole-diterpene mycotoxins that are potent tremorgens in mammals, and are synthesized by clavicipitaceous fungal endophytes in association with their grass hosts. The geranylgeranyl diphosphate (GGPP) synthase ltmG is proposed to catalyze the first step in lolitrem biosynthesis. LtmG catalyzes a series of iterative condensations of isopentenyl diphosphate (IPP) with dimethylallyl diphosphate (DMAPP), geranyl diphosphate (GPP), and farnesyl diphosphate (FPP), to form GGPP. GGPP then condenses with indole-3-glycerol phosphate to form 3-geranylgeranylindole, an acyclic intermediate, to be incorporated into paxilline. Either ltmG or ltmC could be responsible for this step, as both are putative prenyl transferases. The FAD-dependent monooxygenase ltmM then catalyzes the epoxidation of the two terminal alkenes of the geranylgeranyl moiety, which is subsequently cyclized by ltmB, to paspaline. The cytochrome P450 monooxygenases ltmQ and ltmP can sequentially oxidize paspaline to terpendole E and terpendole F. Alternatively, ltmP converts paspaline to an intermediate which is oxidized by ltmQ to terpendole F. LtmF, ltmK, ltmE and ltmJ appear to be unique to the epichloe endophytes. The prenyltransferase ltmF is involved in the 27-hydroxyl-O-prenylation. The cytochrome P450 monooxygenase ltmK is required for the oxidative acetal ring formation. The multi-functional prenyltransferase ltmE is required for C20- and C21-prenylations of the indole ring of paspalanes and acts together with the cytochrome P450 monooxygenase ltmJ to yield lolitremanes by multiple oxidations and ring closures. The stereoisomer pairs of lolitriol and lolitrem N or lolitrem B and lolitrem F may be attributed to variations in the way in which ring closure can occur under the action of ltmJ. While the major product of this pathway is lolitrem B, the prenyl transferases and cytochrome P450 monooxygenases identified in this pathway have a remarkable versatility in their regio- and stereo-specificities to generate a diverse range of metabolites that are products of a metabolic grid rather than a linear pathway. In Epichloe festucae var. lolii (Neotyphodium lolii), this protein is Cytochrome P450 monooxygenase ltmJ (ltmJ).